The chain runs to 447 residues: Probable rhamnogalacturonase C (447 aa).

The signal sequence occupies residues 1–19; sequence MQVKLFYTLALWAPILVSA. 2 N-linked (GlcNAc...) asparagine glycosylation sites follow: N37 and N65. Cysteines 40 and 66 form a disulfide. Catalysis depends on D217, which acts as the Proton donor. C219 and C236 are disulfide-bonded. Residues N237 and N252 are each glycosylated (N-linked (GlcNAc...) asparagine). Residue H291 is part of the active site. The N-linked (GlcNAc...) asparagine glycan is linked to N316. Intrachain disulfides connect C338-C344 and C366-C375.

Belongs to the glycosyl hydrolase 28 family.

The protein localises to the secreted. Pectinolytic enzymes consist of four classes of enzymes: pectine lyase, polygalacturonase, pectin methylesterase and rhamnogalacturonase. Hydrolyzes alpha-D-galacturonopyranosyl-(1,2)-alpha-L-rhamnopyranosyl linkages in the backbone of the hairy regions of pectins. This is Probable rhamnogalacturonase C (rhgC) from Aspergillus flavus (strain ATCC 200026 / FGSC A1120 / IAM 13836 / NRRL 3357 / JCM 12722 / SRRC 167).